Reading from the N-terminus, the 907-residue chain is Envelope glycoprotein B (907 aa).

An N-terminal signal peptide occupies residues 1-24 (MESRIWCLVVCVNLCIVCLGAAVS). The Virion surface portion of the chain corresponds to 25 to 751 (SSSTRGTSAT…EGVATFLKNP (727 aa)). The tract at residues 29–62 (RGTSATHSHHSSHTTSAAHSRSGSVSQRVTSSQT) is disordered. Low complexity predominate over residues 41–62 (HTTSAAHSRSGSVSQRVTSSQT). Asparagine 68, asparagine 73, and asparagine 85 each carry an N-linked (GlcNAc...) asparagine; by host glycan. Cystine bridges form between cysteine 94–cysteine 551, cysteine 111–cysteine 507, cysteine 185–cysteine 250, and cysteine 344–cysteine 391. An involved in fusion and/or binding to host membrane region spans residues 152-158 (SYAYIHT). Asparagine 208 is a glycosylation site (N-linked (GlcNAc...) asparagine; by host). The segment at 237–244 (GSTWLYRE) is involved in fusion and/or binding to host membrane. Residues asparagine 281, asparagine 286, asparagine 302, asparagine 341, asparagine 383, asparagine 405, asparagine 409, asparagine 417, asparagine 447, asparagine 452, asparagine 456, asparagine 466, asparagine 555, and asparagine 586 are each glycosylated (N-linked (GlcNAc...) asparagine; by host). The cysteines at positions 574 and 611 are disulfide-linked. The tract at residues 697 to 749 (VEDKVVDPLPPYLKGLDDLMSGLGAAGKAVGVAIGAVGGAVASVVEGVATFLK) is hydrophobic membrane proximal region. Residues 752–772 (FGAFTIILVAIAVVIITYLIY) form a helical membrane-spanning segment. Residues 773–907 (TRQRRLCTQP…LKDSDEEENV (135 aa)) lie on the Intravirion side of the membrane. 2 stretches are compositionally biased toward polar residues: residues 798 to 810 (VTSG…SLQA) and 860 to 877 (RAQQ…GTQD). 2 disordered regions span residues 798-838 (VTSG…TAAP) and 857-907 (AEQR…EENV). The segment covering 878–887 (KGQKPNLLDR) has biased composition (basic and acidic residues). An Internalization motif motif is present at residues 895–898 (YRHL).

The protein belongs to the herpesviridae glycoprotein B family. Homotrimer; disulfide-linked. Binds to heparan sulfate proteoglycans. Interacts with gH/gL heterodimer. In terms of processing, a proteolytic cleavage by host furin generates two subunits that remain linked by disulfide bonds.

It localises to the virion membrane. The protein localises to the host cell membrane. The protein resides in the host endosome membrane. Its subcellular location is the host Golgi apparatus membrane. In terms of biological role, envelope glycoprotein that forms spikes at the surface of virion envelope. Essential for the initial attachment to heparan sulfate moieties of the host cell surface proteoglycans. Involved in fusion of viral and cellular membranes leading to virus entry into the host cell. Following initial binding to its host receptors, membrane fusion is mediated by the fusion machinery composed at least of gB and the heterodimer gH/gL. May be involved in the fusion between the virion envelope and the outer nuclear membrane during virion egress. The polypeptide is Envelope glycoprotein B (Human cytomegalovirus (strain Merlin) (HHV-5)).